Reading from the N-terminus, the 242-residue chain is Probable transcriptional regulatory protein NGO_1291 (242 aa).

The protein belongs to the TACO1 family.

Its subcellular location is the cytoplasm. This is Probable transcriptional regulatory protein NGO_1291 from Neisseria gonorrhoeae (strain ATCC 700825 / FA 1090).